A 970-amino-acid chain; its full sequence is Villin-3 (970 aa).

6 Gelsolin-like repeats span residues 31–111, 151–219, 273–339, 416–484, 536–576, and 643–714; these read AVPV…ERFL, TVHV…EDGK, VLTR…TVIF, KFYS…PAEF, AIQV…QELA, and NFTQ…PQFF. Positions 741–908 are disordered; the sequence is DGVKPKLDKP…EGQPENEEGL (168 aa). Positions 755 to 778 are enriched in polar residues; it reads TTSSSHTGRSSVPEKSQRSRSMSF. The segment covering 833-842 has biased composition (low complexity); it reads AASIAAISAS. The segment covering 878–893 has biased composition (polar residues); that stretch reads KDSTPSKDSPTVTPTI. An HP domain is found at 905–970; the sequence is EEGLPVYPYE…NRLKIALQLF (66 aa).

Belongs to the villin/gelsolin family. In terms of tissue distribution, expressed in roots, young leaves, and inflorescences, mostly in the vasculature of roots, leaves, and filaments of the anthers and in epidermal cells of the elongation zone and root hairs. Also detected in guard cells.

The protein resides in the cytoplasm. The protein localises to the cytoskeleton. In terms of biological role, ca(2+)-regulated actin-binding protein. Binds actin microfilaments (MFs). Involved in actin filament bundling, severing and capping. Caps the barbed end of actin filaments and is able to sever them in a calcium-dependent manner. MF severing is promoted by VLN1. This chain is Villin-3, found in Oryza sativa subsp. japonica (Rice).